The sequence spans 344 residues: Olfactory receptor class A-like protein 4 (344 aa).

Residues 1–10 (MSEVLTVDAV) are Extracellular-facing. A helical transmembrane segment spans residues 11 to 31 (LFGLLVFSGIIGNIMVIYVVF). Over 32-47 (DCAKLCASRHLPPSDT) the chain is Cytoplasmic. Residues 48-68 (ILVHLCLANLLTSVFRTVPIF) form a helical membrane-spanning segment. At 69-84 (VSDLGLQVWLTAGWCR) the chain is on the extracellular side. C83 and C169 are disulfide-bonded. Residues 85-105 (VFMLLWVWWRAVGCWVTLALS) form a helical membrane-spanning segment. Residues 106-130 (AFHCATLRRQHVSMGPLGHSRERRR) are Cytoplasmic-facing. Residues 131–151 (VWVVLAVVWAANLLFSLPALV) form a helical membrane-spanning segment. Residues 152 to 186 (YTTQVRGNATVELMVISCTTRPLLGCVWEFPTFQQ) lie on the Extracellular side of the membrane. N-linked (GlcNAc...) asparagine glycosylation occurs at N159. A helical membrane pass occupies residues 187 to 207 (GYAFASSSLALNEVLPLVLMV). Over 208 to 246 (GTNLATLQALGKHIRTVRAGGSTGAELDRHVSSERKAGH) the chain is Cytoplasmic. Residues 247-267 (VIMALVALFVGCWVLQVAAVT) form a helical membrane-spanning segment. The Extracellular segment spans residues 268-279 (YYNHNRGAHAEG). Residues 280–300 (LLTVAHFSASLFVGFSPLVVA) traverse the membrane as a helical segment. Over 301–344 (LGHGKLRRRISGILQSCMHRLKQTQDKPAEITEKDGRTTQSAMK) the chain is Cytoplasmic. The span at 324-337 (TQDKPAEITEKDGR) shows a compositional bias: basic and acidic residues. The disordered stretch occupies residues 324-344 (TQDKPAEITEKDGRTTQSAMK).

This sequence belongs to the G-protein coupled receptor 1 family. In terms of tissue distribution, highly expressed in the olfactory rosette. Specifically localizes to crypt neurons in the olfactory neuroepithelium. Colocalizes with the inhibitory G-protein gnaia in crypt neurons. Not detected in other tissues tested.

Its subcellular location is the cell membrane. Functionally, probable olfactory receptor. In Danio rerio (Zebrafish), this protein is Olfactory receptor class A-like protein 4 (ora4).